Consider the following 107-residue polypeptide: Small polypeptide DEVIL 9 (107 aa).

The span at 1-12 shows a compositional bias: basic and acidic residues; it reads MDEKWRLSKKDA. The interval 1-79 is disordered; that stretch reads MDEKWRLSKK…EKGSITQKYS (79 aa). A helical transmembrane segment spans residues 9-29; that stretch reads KKDALAASCSSSSTSSKSKFS. The span at 13-65 shows a compositional bias: low complexity; sequence LAASCSSSSTSSKSKFSRSFSTSASSSKAPAFVRSSSTKCSVPSSSSSSISRS. The tract at residues 73 to 104 is required for DVL/RTFL small polypeptide activity; the sequence is SITQKYSSLAKEQKGRFYIMRRCVAMLVCWHK.

Belongs to the DVL/RTFL small polypeptides family.

It is found in the cell membrane. Its function is as follows. Small polypeptide acting as a regulatory molecule which coordinates cellular responses required for differentiation, growth and development, probably by restricting polar cell proliferation in lateral organs and coordinating socket cell recruitment and differentiation at trichome sites. The chain is Small polypeptide DEVIL 9 from Arabidopsis thaliana (Mouse-ear cress).